A 353-amino-acid chain; its full sequence is Mas-related G-protein coupled receptor member B5 (353 aa).

At 1–67 the chain is on the extracellular side; that stretch reads MPDSPTESYG…SCIITFNTLN (67 aa). Asparagine 26 and asparagine 44 each carry an N-linked (GlcNAc...) asparagine glycan. Residues 68–90 form a helical membrane-spanning segment; the sequence is FLTATISVVGTAGNATVLRLLGF. At 91–96 the chain is on the cytoplasmic side; the sequence is HMHRYA. A helical membrane pass occupies residues 97-117; that stretch reads FSVYVFNLAGADFLYLCTQTV. Topologically, residues 118–131 are extracellular; sequence YSLECVLQFDNSYF. A helical transmembrane segment spans residues 132–152; sequence YFLLTILMFAYLAALCMIPAI. The Cytoplasmic segment spans residues 153–180; that stretch reads STERCLSVTWPIWYHCQRPRHTSATVCA. Residues 181 to 201 form a helical membrane-spanning segment; sequence LFWAFSLLLRLLLGQGCGFLF. Residues 202–213 lie on the Extracellular side of the membrane; the sequence is GKYDYYFCRYCS. Residues 214–234 traverse the membrane as a helical segment; the sequence is FITTAFLIVLFVVPFVSSLAM. The Cytoplasmic segment spans residues 235 to 253; sequence LTKIICGSHRIPVTRFYVT. Residues 254-274 form a helical membrane-spanning segment; sequence IAVTVLVFTFFGLPVGIISLL. Over 275–289 the chain is Extracellular; the sequence is LPRIVVFRGVFYIYK. A helical membrane pass occupies residues 290–310; the sequence is IVTFLYSVNCCANPIIYFLIG. The Cytoplasmic segment spans residues 311 to 353; the sequence is SIRHHRLQRQSLKLLLQRAMQDTPEEEGGVKGPSQKSNELEIV. Residues 333–353 are disordered; that stretch reads TPEEEGGVKGPSQKSNELEIV.

It belongs to the G-protein coupled receptor 1 family. Mas subfamily. In terms of tissue distribution, expressed strongly in newborn dorsal root ganglia, adult dorsal root ganglia and trigeminal ganlia.

Its subcellular location is the membrane. Functionally, orphan receptor. Probably involved in the function of nociceptive neurons. May regulate nociceptor function and/or development, including the sensation or modulation of pain. In Rattus norvegicus (Rat), this protein is Mas-related G-protein coupled receptor member B5 (Mrgprb5).